Reading from the N-terminus, the 968-residue chain is Protein translocase subunit SecA 1 (968 aa).

Residues glutamine 86, 104–108 (GEGKT), and aspartate 493 each bind ATP. 2 stretches are compositionally biased toward basic and acidic residues: residues 858–868 (EAEKTEDKAED) and 883–898 (ESAK…ESVA). Residues 858-968 (EAEKTEDKAE…KCHGAPKSRV (111 aa)) are disordered. Zn(2+) is bound by residues cysteine 949, cysteine 951, cysteine 960, and histidine 961. Basic residues predominate over residues 955–968 (KKYKKCHGAPKSRV).

It belongs to the SecA family. In terms of assembly, monomer and homodimer. Part of the essential Sec protein translocation apparatus which comprises SecA, SecYEG and auxiliary proteins SecDF. Other proteins may also be involved. It depends on Zn(2+) as a cofactor.

It is found in the cell membrane. The protein resides in the cytoplasm. It catalyses the reaction ATP + H2O + cellular proteinSide 1 = ADP + phosphate + cellular proteinSide 2.. Part of the Sec protein translocase complex. Interacts with the SecYEG preprotein conducting channel. Has a central role in coupling the hydrolysis of ATP to the transfer of proteins into and across the cell membrane, serving as an ATP-driven molecular motor driving the stepwise translocation of polypeptide chains across the membrane. The protein is Protein translocase subunit SecA 1 of Thermobifida fusca (strain YX).